The following is a 323-amino-acid chain: tRNA-modifying protein YgfZ (323 aa).

Residues Trp29 and Trp182 each contribute to the folate site.

It belongs to the tRNA-modifying YgfZ family.

It localises to the cytoplasm. Folate-binding protein involved in regulating the level of ATP-DnaA and in the modification of some tRNAs. It is probably a key factor in regulatory networks that act via tRNA modification, such as initiation of chromosomal replication. This Vibrio cholerae serotype O1 (strain M66-2) protein is tRNA-modifying protein YgfZ.